A 396-amino-acid chain; its full sequence is Acetate kinase (396 aa).

Residue N7 participates in Mg(2+) binding. K14 is an ATP binding site. Residue R91 participates in substrate binding. The active-site Proton donor/acceptor is the D148. ATP-binding positions include H208–G212, D283–R285, and G331–N335. E384 contacts Mg(2+).

Belongs to the acetokinase family. Homodimer. Mg(2+) serves as cofactor. It depends on Mn(2+) as a cofactor.

The protein resides in the cytoplasm. The enzyme catalyses acetate + ATP = acetyl phosphate + ADP. It participates in metabolic intermediate biosynthesis; acetyl-CoA biosynthesis; acetyl-CoA from acetate: step 1/2. Its function is as follows. Catalyzes the formation of acetyl phosphate from acetate and ATP. Can also catalyze the reverse reaction. In Alkaliphilus metalliredigens (strain QYMF), this protein is Acetate kinase.